A 536-amino-acid chain; its full sequence is Phosphoenolpyruvate carboxykinase (ATP) (536 aa).

Residues Arg-61, Tyr-195, and Lys-201 each coordinate substrate. Residues Lys-201, His-220, and 236–244 contribute to the ATP site; that span reads GLSGTGKTT. Mn(2+)-binding residues include Lys-201 and His-220. Asp-257 contributes to the Mn(2+) binding site. Glu-285, Arg-322, and Thr-447 together coordinate ATP. Substrate is bound at residue Arg-322.

The protein belongs to the phosphoenolpyruvate carboxykinase (ATP) family. Requires Mn(2+) as cofactor.

Its subcellular location is the cytoplasm. It carries out the reaction oxaloacetate + ATP = phosphoenolpyruvate + ADP + CO2. Its pathway is carbohydrate biosynthesis; gluconeogenesis. In terms of biological role, involved in the gluconeogenesis. Catalyzes the conversion of oxaloacetate (OAA) to phosphoenolpyruvate (PEP) through direct phosphoryl transfer between the nucleoside triphosphate and OAA. The sequence is that of Phosphoenolpyruvate carboxykinase (ATP) from Brucella suis biovar 1 (strain 1330).